We begin with the raw amino-acid sequence, 87 residues long: DNA-directed RNA polymerase subunit omega (87 aa).

It belongs to the RNA polymerase subunit omega family. In terms of assembly, the RNAP catalytic core consists of 2 alpha, 1 beta, 1 beta' and 1 omega subunit. When a sigma factor is associated with the core the holoenzyme is formed, which can initiate transcription.

It catalyses the reaction RNA(n) + a ribonucleoside 5'-triphosphate = RNA(n+1) + diphosphate. Functionally, promotes RNA polymerase assembly. Latches the N- and C-terminal regions of the beta' subunit thereby facilitating its interaction with the beta and alpha subunits. This is DNA-directed RNA polymerase subunit omega from Pseudomonas fluorescens (strain ATCC BAA-477 / NRRL B-23932 / Pf-5).